The chain runs to 202 residues: Type II restriction enzyme MthZI (202 aa).

The enzyme catalyses Endonucleolytic cleavage of DNA to give specific double-stranded fragments with terminal 5'-phosphates.. In terms of biological role, a P subtype restriction enzyme that recognizes the double-stranded sequence 5'-CTAG-3' and cleaves after C-1. In Methanothermobacter thermautotrophicus (Methanobacterium thermoformicicum), this protein is Type II restriction enzyme MthZI.